The following is a 327-amino-acid chain: MVVELKNIEKIYENGFHALKGVNLELKKGDILGVIGYSGAGKSTLIRLINCLERPSSGEVLVNGVNLLKLKPKELQKARQKIGMIFQHFNLLSAKNVFENVAFALEIARWEKNKIKSRVHELLELVGLEDKMHFYPKQLSGGQKQRVAIARSLANCPDLLLCDEATSALDSKTTHSILTLLSGIQKKLDLSIVFITHEIEVVKELCNQMCVISSGEIVERGSVEEIFANPKHAVTKELLGIRNEHADKKSQDVYRIVFLGEHLDEPIISNLIKRFKIDVSIISGNIEELTTKDIGYLVVRFLGNTAETQRALEYLNALGLQVEKLKD.

One can recognise an ABC transporter domain in the interval 3 to 239 (VELKNIEKIY…PKHAVTKELL (237 aa)). 36–43 (GYSGAGKS) contributes to the ATP binding site.

The protein belongs to the ABC transporter superfamily. Methionine importer (TC 3.A.1.24) family. As to quaternary structure, the complex is composed of two ATP-binding proteins (MetN), two transmembrane proteins (MetI) and a solute-binding protein (MetQ).

The protein resides in the cell inner membrane. It carries out the reaction L-methionine(out) + ATP + H2O = L-methionine(in) + ADP + phosphate + H(+). The enzyme catalyses D-methionine(out) + ATP + H2O = D-methionine(in) + ADP + phosphate + H(+). Its function is as follows. Part of the ABC transporter complex MetNIQ involved in methionine import. Responsible for energy coupling to the transport system. This is Methionine import ATP-binding protein MetN from Helicobacter pylori (strain ATCC 700392 / 26695) (Campylobacter pylori).